A 151-amino-acid chain; its full sequence is Small ribosomal subunit protein uS15 (151 aa).

Basic residues predominate over residues 1-16; it reads MPHRSRDKKGRSRSVR. Residues 1-20 are disordered; the sequence is MPHRSRDKKGRSRSVRPAHP.

This sequence belongs to the universal ribosomal protein uS15 family. In terms of assembly, part of the 30S ribosomal subunit.

This Pyrobaculum aerophilum (strain ATCC 51768 / DSM 7523 / JCM 9630 / CIP 104966 / NBRC 100827 / IM2) protein is Small ribosomal subunit protein uS15.